A 359-amino-acid polypeptide reads, in one-letter code: Glycogen synthase kinase-3 (359 aa).

The region spanning 36–320 (YYDQKVIGNG…PQAACQHAFF (285 aa)) is the Protein kinase domain. Residues 42–50 (IGNGSFGVV) and Lys65 each bind ATP. Asp161 acts as the Proton acceptor in catalysis. The disordered stretch occupies residues 330–359 (LPSGRALPQLEMDGPNEVSATGGDMAGPSA).

The protein belongs to the protein kinase superfamily. CMGC Ser/Thr protein kinase family. GSK-3 subfamily. Monomer. Interacts with axl-1.

It catalyses the reaction L-seryl-[tau protein] + ATP = O-phospho-L-seryl-[tau protein] + ADP + H(+). It carries out the reaction L-threonyl-[tau protein] + ATP = O-phospho-L-threonyl-[tau protein] + ADP + H(+). Its function is as follows. Phosphorylates oma-1, a regulator of the oocyte-to-embryo transition, enabling its degradation. Phosphorylates skn-1, preventing it from accumulating in nuclei and thus inhibiting phase II gene expression in the oxidative stress defense. Involved in mesendoderm specification and mitotic spindle orientation in EMS blastomeres. Thought to be a branch point in these processes as proteins downstream are not required. Negatively regulates Wnt signaling in vulval precursor cells and acts as a Wnt-independent repressor of med-1 and med-2 in the C lineage inhibiting mesoderm development. Required for normal lifespan and LiCl-induced lifespan extension. This chain is Glycogen synthase kinase-3 (gsk-3), found in Caenorhabditis briggsae.